Here is a 241-residue protein sequence, read N- to C-terminus: DnaA regulatory inactivator Hda (241 aa).

The protein belongs to the DnaA family. HdA subfamily. In terms of assembly, the active form seems to be an ADP-bound monomer. Forms the RIDA complex (regulatory inactivation of DnaA) of ATP-DnaA, ADP-Hda and the DNA-loaded beta sliding clamp (dnaN).

In terms of biological role, mediates the interaction of DNA replication initiator protein DnaA with DNA polymerase subunit beta sliding clamp (dnaN). Stimulates hydrolysis of ATP-DnaA to ADP-DnaA, rendering DnaA inactive for reinitiation, a process called regulatory inhibition of DnaA or RIDA. The protein is DnaA regulatory inactivator Hda of Salmonella paratyphi A (strain ATCC 9150 / SARB42).